Here is a 94-residue protein sequence, read N- to C-terminus: Acylphosphatase (94 aa).

In terms of domain architecture, Acylphosphatase-like spans 7 to 94 (AVRVRISGRV…NMPRDFRITG (88 aa)). Active-site residues include Arg22 and Asn40.

Belongs to the acylphosphatase family.

It carries out the reaction an acyl phosphate + H2O = a carboxylate + phosphate + H(+). In Rhizobium etli (strain ATCC 51251 / DSM 11541 / JCM 21823 / NBRC 15573 / CFN 42), this protein is Acylphosphatase (acyP).